The primary structure comprises 428 residues: MSMGILDELDWRGLIAQSTDRETLANDLANGPMTVYSGFDPTAPSLHAGHLVPLLTLRRFQRAGHRPIVLAGGATGMIGDPRDTGERTLNTADTVADWAGRIRGQLERFVEFDDTPTGAIVENNLNWTGRLSAIEFLRDLGKYFSVNVMLDRETVRRRLEGDGISYTEFSYMLLQANDFVELHQRYGCALQIGGSDQWGNIVAGARLVRQKLGATVHAMTTPLVTDSEGKKFGKSTGGGNLWLDPEMTSPYAWYQYFVNTADADVIGYLRWFTFLSADEIAELEDATQNRAHERAAQKRLARELTTLVHGEGATTAVELASQALFGRAELADLDESTLGAALREASNGQVAELKPGGPDSIVDLLVETGLAASKGAARRNVAEGGVYVNNIRIESDEWIPQHSDFLHERWLVLRRGKRHIAGVERVGA.

Y36 lines the L-tyrosine pocket. Positions 41–50 match the 'HIGH' region motif; sequence PTAPSLHAGH. L-tyrosine-binding residues include Y171 and Q175. A 'KMSKS' region motif is present at residues 231 to 235; the sequence is KFGKS. K234 serves as a coordination point for ATP. Residues 359–416 enclose the S4 RNA-binding domain; sequence DSIVDLLVETGLAASKGAARRNVAEGGVYVNNIRIESDEWIPQHSDFLHERWLVLRRG.

The protein belongs to the class-I aminoacyl-tRNA synthetase family. TyrS type 1 subfamily. Homodimer.

It is found in the cytoplasm. It catalyses the reaction tRNA(Tyr) + L-tyrosine + ATP = L-tyrosyl-tRNA(Tyr) + AMP + diphosphate + H(+). Its function is as follows. Catalyzes the attachment of tyrosine to tRNA(Tyr) in a two-step reaction: tyrosine is first activated by ATP to form Tyr-AMP and then transferred to the acceptor end of tRNA(Tyr). The chain is Tyrosine--tRNA ligase from Mycolicibacterium fortuitum (Mycobacterium fortuitum).